The primary structure comprises 455 residues: MYKCALVLAAGQGKRIKSDLPKVLHKVCGKEMVNHVIDTIRKAGIQDANIIIGKGAELVKERTEEKKVTYSLQSEQLGTGHAVQCASEFLKGKKGTVAVFAGDTPLIKESTIKNLFNTHIEAKNAATILTAIVDDPTGYGRIIRSGNEVLKIVEHKDCNEEELKVNEMNSAIYCFDIKLLYESLSKLSNNNEQGEYYLTDVIEILKSAGHNIGAVVTDFEETIGVNSRAQLAQAEEILKDRINLKHMENGVTLIDPKTTYIGIDVEIGKDTIIYPNNIFEGNTIIGERCTIYQNSRIKDSIIKDEVDIQSSVILDSSIGNNTTVGPFAYIRPESKIGEKARIGDFVEIKKSIIGDGTKVSHLTYIGDAEVGKECNFGCGTVVVNYDGKKKYKTIIGNHSFIGCNTNLVSPVQVGDNTYIAAGSTITSEVQEGDLAVARAKQRNIKGWVDKKGLKK.

The pyrophosphorylase stretch occupies residues 1–228; the sequence is MYKCALVLAA…FEETIGVNSR (228 aa). UDP-N-acetyl-alpha-D-glucosamine-binding positions include 8–11, lysine 22, glutamine 73, and 78–79; these read LAAG and GT. Aspartate 103 contributes to the Mg(2+) binding site. The UDP-N-acetyl-alpha-D-glucosamine site is built by glycine 140, glutamate 154, asparagine 169, and asparagine 226. Asparagine 226 serves as a coordination point for Mg(2+). Residues 229–249 are linker; the sequence is AQLAQAEEILKDRINLKHMEN. The tract at residues 250-455 is N-acetyltransferase; it reads GVTLIDPKTT…GWVDKKGLKK (206 aa). Arginine 331 and lysine 349 together coordinate UDP-N-acetyl-alpha-D-glucosamine. The active-site Proton acceptor is histidine 361. The UDP-N-acetyl-alpha-D-glucosamine site is built by tyrosine 364 and asparagine 375. Acetyl-CoA contacts are provided by residues 384–385, alanine 421, and arginine 438; that span reads NY.

In the N-terminal section; belongs to the N-acetylglucosamine-1-phosphate uridyltransferase family. It in the C-terminal section; belongs to the transferase hexapeptide repeat family. As to quaternary structure, homotrimer. It depends on Mg(2+) as a cofactor.

It localises to the cytoplasm. It catalyses the reaction alpha-D-glucosamine 1-phosphate + acetyl-CoA = N-acetyl-alpha-D-glucosamine 1-phosphate + CoA + H(+). The enzyme catalyses N-acetyl-alpha-D-glucosamine 1-phosphate + UTP + H(+) = UDP-N-acetyl-alpha-D-glucosamine + diphosphate. Its pathway is nucleotide-sugar biosynthesis; UDP-N-acetyl-alpha-D-glucosamine biosynthesis; N-acetyl-alpha-D-glucosamine 1-phosphate from alpha-D-glucosamine 6-phosphate (route II): step 2/2. The protein operates within nucleotide-sugar biosynthesis; UDP-N-acetyl-alpha-D-glucosamine biosynthesis; UDP-N-acetyl-alpha-D-glucosamine from N-acetyl-alpha-D-glucosamine 1-phosphate: step 1/1. It participates in bacterial outer membrane biogenesis; LPS lipid A biosynthesis. Catalyzes the last two sequential reactions in the de novo biosynthetic pathway for UDP-N-acetylglucosamine (UDP-GlcNAc). The C-terminal domain catalyzes the transfer of acetyl group from acetyl coenzyme A to glucosamine-1-phosphate (GlcN-1-P) to produce N-acetylglucosamine-1-phosphate (GlcNAc-1-P), which is converted into UDP-GlcNAc by the transfer of uridine 5-monophosphate (from uridine 5-triphosphate), a reaction catalyzed by the N-terminal domain. This chain is Bifunctional protein GlmU, found in Clostridium botulinum (strain Eklund 17B / Type B).